The primary structure comprises 268 residues: Pantothenate synthetase (268 aa).

18–25 (MGYLHEGH) lines the ATP pocket. Catalysis depends on His-25, which acts as the Proton donor. A (R)-pantoate-binding site is contributed by Gln-49. Position 49 (Gln-49) interacts with beta-alanine. 135 to 138 (GQKD) provides a ligand contact to ATP. Gln-141 provides a ligand contact to (R)-pantoate. Residues Val-164 and 172-175 (LSSR) each bind ATP.

It belongs to the pantothenate synthetase family. In terms of assembly, homodimer.

The protein resides in the cytoplasm. It catalyses the reaction (R)-pantoate + beta-alanine + ATP = (R)-pantothenate + AMP + diphosphate + H(+). It participates in cofactor biosynthesis; (R)-pantothenate biosynthesis; (R)-pantothenate from (R)-pantoate and beta-alanine: step 1/1. Its function is as follows. Catalyzes the condensation of pantoate with beta-alanine in an ATP-dependent reaction via a pantoyl-adenylate intermediate. This chain is Pantothenate synthetase, found in Dehalococcoides mccartyi (strain ATCC BAA-2266 / KCTC 15142 / 195) (Dehalococcoides ethenogenes (strain 195)).